The primary structure comprises 64 residues: Beta-defensin 2 (64 aa).

Residues Met-1 to Thr-22 form the signal peptide. 3 disulfides stabilise this stretch: Cys-31/Cys-60, Cys-38/Cys-53, and Cys-43/Cys-61.

This sequence belongs to the beta-defensin family.

Its subcellular location is the secreted. Has bactericidal activity. The chain is Beta-defensin 2 (DEFB2) from Ovis aries (Sheep).